Here is a 163-residue protein sequence, read N- to C-terminus: NADH-quinone oxidoreductase subunit I (163 aa).

4Fe-4S ferredoxin-type domains follow at residues 54–84 (LRRYPNGEERCIACKLCEAVCPAMAITIESE) and 94–123 (TRYDIDLTKCIFCGFCEESCPVDSIVETRI). [4Fe-4S] cluster-binding residues include Cys-64, Cys-67, Cys-70, Cys-74, Cys-103, Cys-106, Cys-109, and Cys-113.

It belongs to the complex I 23 kDa subunit family. In terms of assembly, NDH-1 is composed of 14 different subunits. Subunits NuoA, H, J, K, L, M, N constitute the membrane sector of the complex. [4Fe-4S] cluster is required as a cofactor.

Its subcellular location is the cell inner membrane. The catalysed reaction is a quinone + NADH + 5 H(+)(in) = a quinol + NAD(+) + 4 H(+)(out). Its function is as follows. NDH-1 shuttles electrons from NADH, via FMN and iron-sulfur (Fe-S) centers, to quinones in the respiratory chain. The immediate electron acceptor for the enzyme in this species is believed to be ubiquinone. Couples the redox reaction to proton translocation (for every two electrons transferred, four hydrogen ions are translocated across the cytoplasmic membrane), and thus conserves the redox energy in a proton gradient. This is NADH-quinone oxidoreductase subunit I from Methylobacillus flagellatus (strain ATCC 51484 / DSM 6875 / VKM B-1610 / KT).